Here is a 587-residue protein sequence, read N- to C-terminus: uncharacterized protein (587 aa).

Positions 61 to 426 (GKGASKKAAL…DLPNWHHDAE (366 aa)) constitute a YcaO domain.

This is an uncharacterized protein from Haemophilus influenzae (strain ATCC 51907 / DSM 11121 / KW20 / Rd).